Here is a 309-residue protein sequence, read N- to C-terminus: MITFLPIIFSSLVVVTFVIGNFANGFIALVNSIEWFKRQKISFADQILTALAVSRVGLLWVLLLNWYSTVLNPAFNSVEVRTTAYNIWAVINHFSNWLATSLSIFYLLKIANFSNFIFLHLKRRVKSVILVMLLGPLLFLACHLFVINMNEIVRTKEFEGNMTWKIKLKSAMYFSNMTVTMVANLVPFTLTLLSFLLLICSLCKHLKKMQLHGKGSQDPSTKVHIKVLQTVISFLLLCAIYFLSIMISVWSFGSLKNKPVFMFCKAMRFSYPSIHPFILIWGNKKLKQTFLSVFWQMRYWVKGEKTSSP.

Position 1 (M1) is a topological domain, extracellular. A helical transmembrane segment spans residues 2–22 (ITFLPIIFSSLVVVTFVIGNF). Residues 23-46 (ANGFIALVNSIEWFKRQKISFADQ) are Cytoplasmic-facing. The helical transmembrane segment at 47 to 67 (ILTALAVSRVGLLWVLLLNWY) threads the bilayer. Over 68–86 (STVLNPAFNSVEVRTTAYN) the chain is Extracellular. Residues 87 to 107 (IWAVINHFSNWLATSLSIFYL) form a helical membrane-spanning segment. Over 108 to 126 (LKIANFSNFIFLHLKRRVK) the chain is Cytoplasmic. Residues 127–147 (SVILVMLLGPLLFLACHLFVI) traverse the membrane as a helical segment. The Extracellular segment spans residues 148-178 (NMNEIVRTKEFEGNMTWKIKLKSAMYFSNMT). 2 N-linked (GlcNAc...) asparagine glycosylation sites follow: N161 and N176. A helical transmembrane segment spans residues 179–199 (VTMVANLVPFTLTLLSFLLLI). The Cytoplasmic segment spans residues 200–229 (CSLCKHLKKMQLHGKGSQDPSTKVHIKVLQ). Residues 230–250 (TVISFLLLCAIYFLSIMISVW) traverse the membrane as a helical segment. The Extracellular segment spans residues 251-259 (SFGSLKNKP). Residues 260 to 280 (VFMFCKAMRFSYPSIHPFILI) form a helical membrane-spanning segment. Residues 281-309 (WGNKKLKQTFLSVFWQMRYWVKGEKTSSP) lie on the Cytoplasmic side of the membrane.

This sequence belongs to the G-protein coupled receptor T2R family.

The protein resides in the membrane. It is found in the cell projection. The protein localises to the cilium membrane. Gustducin-coupled receptor immplicated in the perception of bitter compounds in the oral cavity and the gastrointestinal tract. Signals through PLCB2 and the calcium-regulated cation channel TRPM5. Activated by the sulfonyl amide sweeteners saccharin and acesulfame K. In airway epithelial cells, binding of bitter compounds increases the intracellular calcium ion concentration and stimulates ciliary beat frequency. May act as chemosensory receptors in airway epithelial cells to detect and eliminate potential noxious agents from the airways. The polypeptide is Taste receptor type 2 member 43 (TAS2R43) (Pan troglodytes (Chimpanzee)).